The sequence spans 345 residues: Phosphoribosylformylglycinamidine cyclo-ligase (345 aa).

Belongs to the AIR synthase family.

The protein localises to the cytoplasm. It catalyses the reaction 2-formamido-N(1)-(5-O-phospho-beta-D-ribosyl)acetamidine + ATP = 5-amino-1-(5-phospho-beta-D-ribosyl)imidazole + ADP + phosphate + H(+). Its pathway is purine metabolism; IMP biosynthesis via de novo pathway; 5-amino-1-(5-phospho-D-ribosyl)imidazole from N(2)-formyl-N(1)-(5-phospho-D-ribosyl)glycinamide: step 2/2. This is Phosphoribosylformylglycinamidine cyclo-ligase from Mannheimia succiniciproducens (strain KCTC 0769BP / MBEL55E).